A 743-amino-acid polypeptide reads, in one-letter code: MMSQATPSATPVRNADGQKKGKKLPLIVDVAIGNNGKQLYQVHESSKMVRKEMPRSTNFALNDDISDEGFFISQINEQRTPIRKTLGTLSPSSLNQKRIRHDVYDQGDDNSNDDNCQNDVYEQQQQQPQQQQQQQQQLHQPNMYENGNVGVISNDPVSSVGHYDNNPVSHVPTGAYSRVQDTDIWSDDVEEAFEEVLRLIPKSGLNKIKIAGRSCGRNELISDYIFAKTGKFRTRKQVSSHIQVIKNLGQKLDIIQLINDGPIFNSHEEQLESTKKFEDVFSKINLNKSLGFSDSMKRKSDSMPMHLPATKRIRRKHSGNPLNKIKFSNFFMSVNDQYGMNPIVLTIQQNGNDVKSLKLKDNANISSRFPGLSDFKSCPHIPIIHNMVKILLPQLPESYSIDDGFSSSYALKYEEPENASPTHTSIISSSRTYSLFTCVYSYGKEIVKFDEDGIQLNQDREFIPGFWKFFFSTFGDQSEGGLSAAFKGVTIKQILYESSPDSVKKEQDASKVNKSKVKLVLLWEFAKVSECKDALTTTTKLVLPPRASASSSKTTEEVFEYSEPALNSIGGTPTDTTSPNMDLNNQNLSAAATSIPGIRDTIHSASMPDINELPSSAKPQVRLQKTFQSMQHLQPHQMWQQQQQQQPSQGAYTSSVASQSLNTSLSSPYAQYGMPLPQQTIGTFVPPTSQTFGVSYTHNSQHPSANMDLMMLSSMNTGYGNITNNQDYQFGNIGYTEGFTSEF.

The span at 1–11 (MMSQATPSATP) shows a compositional bias: polar residues. 2 disordered regions span residues 1-20 (MMSQ…GQKK) and 104-165 (YDQG…HYDN). The span at 113–137 (DDNCQNDVYEQQQQQPQQQQQQQQQ) shows a compositional bias: low complexity. Residues 178 to 252 (RVQDTDIWSD…QVIKNLGQKL (75 aa)) constitute a DNA-binding region (TEA). Residues 629 to 657 (SMQHLQPHQMWQQQQQQQPSQGAYTSSVA) are disordered. A compositionally biased stretch (low complexity) spans 630–649 (MQHLQPHQMWQQQQQQQPSQ).

Belongs to the TEC1 family.

It localises to the nucleus. Functionally, transcription factor which regulates genes involved in hyphal development, cell adhesion, biofilm development, and virulence. Plays a role in the formation of 'finger' morphology, a unique multicellular morphology of C.albicans induced by carbon dioxide. Regulates gene expression during intestinal colonization. Required for the expression of the secreted aspartyl proteinases SAP4, SAP5, and SAP6; but also of BCR1, PGA4, and CDC24. Moreover, a positive feedback loop between CDC24 and TEC1 contributes to an increase in active CDC42 at the tip of the germ tube which is important for hyphae formation. Also regulates the pheromone response of the white cell phenotype. The sequence is that of Transcription activator TEC1 (TEC1) from Candida albicans (strain SC5314 / ATCC MYA-2876) (Yeast).